A 526-amino-acid polypeptide reads, in one-letter code: Radial spoke head protein 6 homolog A (526 aa).

Disordered stretches follow at residues 180–231 (EGED…EENG), 371–411 (VKSE…DAEI), and 469–526 (PPAP…EEDD). 2 stretches are compositionally biased toward acidic residues: residues 181–212 (GEDDEAEEGGEEEEKGEVEDDVEEEENEEAED) and 374–395 (EEEEDEEEAEEEEKEEENEPEP). Residues 497 to 506 (QALKAAKEEA) are compositionally biased toward basic and acidic residues. Positions 507 to 526 (EAAAEEMEEEEDEEEEEEDD) are enriched in acidic residues.

It belongs to the flagellar radial spoke RSP4/6 family. In terms of assembly, component of sperm axonemal radial spoke complexes.

The protein localises to the cytoplasm. The protein resides in the cytoskeleton. It is found in the flagellum axoneme. Its function is as follows. Functions as part of radial spoke complexes in the axoneme of sperm flagella that play an important part in motility. The triple radial spokes (RS1, RS2 and RS3) are required to modulate beating of the sperm flagellum. The polypeptide is Radial spoke head protein 6 homolog A (rsph6a) (Xenopus tropicalis (Western clawed frog)).